Consider the following 109-residue polypeptide: Putative polyketide cyclase (109 aa).

It to polyketide cyclases.

Involved in developmentally regulated synthesis of a compound biosynthetically related to polyketide antibiotics which is essential for spore color in Streptomyces halstedii. The protein is Putative polyketide cyclase (sch4) of Streptomyces halstedii.